We begin with the raw amino-acid sequence, 226 residues long: 2-C-methyl-D-erythritol 4-phosphate cytidylyltransferase (226 aa).

Belongs to the IspD/TarI cytidylyltransferase family. IspD subfamily.

The catalysed reaction is 2-C-methyl-D-erythritol 4-phosphate + CTP + H(+) = 4-CDP-2-C-methyl-D-erythritol + diphosphate. Its pathway is isoprenoid biosynthesis; isopentenyl diphosphate biosynthesis via DXP pathway; isopentenyl diphosphate from 1-deoxy-D-xylulose 5-phosphate: step 2/6. Catalyzes the formation of 4-diphosphocytidyl-2-C-methyl-D-erythritol from CTP and 2-C-methyl-D-erythritol 4-phosphate (MEP). In Clostridium beijerinckii (strain ATCC 51743 / NCIMB 8052) (Clostridium acetobutylicum), this protein is 2-C-methyl-D-erythritol 4-phosphate cytidylyltransferase.